We begin with the raw amino-acid sequence, 123 residues long: Small ribosomal subunit protein uS12c (123 aa).

Positions Met1 to Glu16 are enriched in polar residues. Positions Met1–Ala23 are disordered.

The protein belongs to the universal ribosomal protein uS12 family. Part of the 30S ribosomal subunit.

The protein localises to the plastid. Its subcellular location is the chloroplast. Its function is as follows. With S4 and S5 plays an important role in translational accuracy. Located at the interface of the 30S and 50S subunits. The sequence is that of Small ribosomal subunit protein uS12c (rps12) from Staurastrum punctulatum (Green alga).